The chain runs to 365 residues: Alanine racemase (365 aa).

Lys-35 (proton acceptor; specific for D-alanine) is an active-site residue. The residue at position 35 (Lys-35) is an N6-(pyridoxal phosphate)lysine. Arg-130 contributes to the substrate binding site. The active-site Proton acceptor; specific for L-alanine is Tyr-256. Met-304 is a binding site for substrate.

Belongs to the alanine racemase family. It depends on pyridoxal 5'-phosphate as a cofactor.

The enzyme catalyses L-alanine = D-alanine. It participates in amino-acid biosynthesis; D-alanine biosynthesis; D-alanine from L-alanine: step 1/1. Functionally, catalyzes the interconversion of L-alanine and D-alanine. May also act on other amino acids. The protein is Alanine racemase (alr) of Acidovorax sp. (strain JS42).